A 545-amino-acid polypeptide reads, in one-letter code: CTP synthase (545 aa).

The interval 1 to 265 (MSKYIFVTGG…LVPIAKQLDL (265 aa)) is amidoligase domain. Residue Ser-13 participates in CTP binding. A UTP-binding site is contributed by Ser-13. ATP contacts are provided by residues 14–19 (SLGKGI) and Asp-71. Residues Asp-71 and Glu-139 each coordinate Mg(2+). CTP-binding positions include 146–148 (DIE), 186–191 (KTKPTQ), and Lys-222. UTP contacts are provided by residues 186–191 (KTKPTQ) and Lys-222. The Glutamine amidotransferase type-1 domain occupies 290–544 (KIAFVGKYLQ…VENAYKCQRS (255 aa)). Gly-355 contacts L-glutamine. Cys-382 (nucleophile; for glutamine hydrolysis) is an active-site residue. L-glutamine is bound by residues 383 to 386 (LGMQ), Glu-406, and Arg-473. Residues His-517 and Glu-519 contribute to the active site.

Belongs to the CTP synthase family. Homotetramer.

The enzyme catalyses UTP + L-glutamine + ATP + H2O = CTP + L-glutamate + ADP + phosphate + 2 H(+). It catalyses the reaction L-glutamine + H2O = L-glutamate + NH4(+). The catalysed reaction is UTP + NH4(+) + ATP = CTP + ADP + phosphate + 2 H(+). It participates in pyrimidine metabolism; CTP biosynthesis via de novo pathway; CTP from UDP: step 2/2. Allosterically activated by GTP, when glutamine is the substrate; GTP has no effect on the reaction when ammonia is the substrate. The allosteric effector GTP functions by stabilizing the protein conformation that binds the tetrahedral intermediate(s) formed during glutamine hydrolysis. Inhibited by the product CTP, via allosteric rather than competitive inhibition. Functionally, catalyzes the ATP-dependent amination of UTP to CTP with either L-glutamine or ammonia as the source of nitrogen. Regulates intracellular CTP levels through interactions with the four ribonucleotide triphosphates. This chain is CTP synthase, found in Nautilia profundicola (strain ATCC BAA-1463 / DSM 18972 / AmH).